The sequence spans 472 residues: Collagenase 3 (472 aa).

Residues 1–19 (MHPGVLAAFLFLSWTRCWS) form the signal peptide. Positions 20 to 104 (LPVPNDDDDD…PRCGVPDVGE (85 aa)) are cleaved as a propeptide — activation peptide. A Cysteine switch motif is present at residues 95–102 (PRCGVPDV). Zn(2+) is bound at residue cysteine 97. Asparagine 118 carries an N-linked (GlcNAc...) asparagine glycan. Aspartate 129 serves as a coordination point for Ca(2+). 2 N-linked (GlcNAc...) asparagine glycosylation sites follow: asparagine 153 and asparagine 159. Position 163 (aspartate 163) interacts with Ca(2+). Histidine 173 and aspartate 175 together coordinate Zn(2+). Positions 177 to 247 (YPFDGPSGLL…GALMFPIYTY (71 aa)) are interaction with TIMP2. Ca(2+)-binding residues include aspartate 180, glycine 181, serine 183, and leucine 185. Position 188 (histidine 188) interacts with Zn(2+). The Ca(2+) site is built by asparagine 195, glycine 197, and aspartate 199. Histidine 201 serves as a coordination point for Zn(2+). The Ca(2+) site is built by aspartate 203, aspartate 204, and glutamate 206. Histidine 223 is a Zn(2+) binding site. Glutamate 224 is an active-site residue. The Zn(2+) site is built by histidine 227, histidine 233, and methionine 241. Residues 269 to 472 (PGDEDPNPKH…VMPTNSLLWC (204 aa)) are interaction with collagen. Hemopexin repeat units lie at residues 282–331 (PDKC…WPEL), 332–378 (PNRI…GFPK), 380–428 (VKKI…FPGI), and 429–472 (GDKV…LLWC). An intrachain disulfide couples cysteine 285 to cysteine 472. Residues aspartate 292, isoleucine 294, aspartate 336, and alanine 338 each contribute to the Ca(2+) site. Position 367 is a phosphotyrosine; by PKDCC (tyrosine 367). Ca(2+)-binding residues include serine 384, alanine 386, aspartate 433, and valine 435.

Belongs to the peptidase M10A family. It depends on Ca(2+) as a cofactor. Zn(2+) serves as cofactor. In terms of processing, the proenzyme is activated by removal of the propeptide; this cleavage can be effected by other matrix metalloproteinases, such as MMP2, MMP3 and MMP14 and may involve several cleavage steps. Cleavage can also be autocatalytic, after partial maturation by another protease or after treatment with 4-aminophenylmercuric acetate (APMA) (in vitro). Post-translationally, N-glycosylated. Tyrosine phosphorylated by PKDCC/VLK. As to expression, seems to be specific to breast carcinomas.

The protein resides in the secreted. Its subcellular location is the extracellular space. The protein localises to the extracellular matrix. Functionally, plays a role in the degradation of extracellular matrix proteins including fibrillar collagen, fibronectin, TNC and ACAN. Cleaves triple helical collagens, including type I, type II and type III collagen, but has the highest activity with soluble type II collagen. Can also degrade collagen type IV, type XIV and type X. May also function by activating or degrading key regulatory proteins, such as TGFB1 and CCN2. Plays a role in wound healing, tissue remodeling, cartilage degradation, bone development, bone mineralization and ossification. Required for normal embryonic bone development and ossification. Plays a role in the healing of bone fractures via endochondral ossification. Plays a role in wound healing, probably by a mechanism that involves proteolytic activation of TGFB1 and degradation of CCN2. Plays a role in keratinocyte migration during wound healing. May play a role in cell migration and in tumor cell invasion. The protein is Collagenase 3 (MMP13) of Equus caballus (Horse).